The primary structure comprises 324 residues: Transcriptional regulator protein Pur-beta (324 aa).

A disordered region spans residues 1–47; the sequence is MADGDSGSERGGGGGGGGGPGGFQPAPRGGGGGGGGPGGEQETQELA. At A2 the chain carries N-acetylalanine. A phosphoserine mark is found at S6 and S8. Positions 9–39 are enriched in gly residues; sequence ERGGGGGGGGGPGGFQPAPRGGGGGGGGPGG. R28 is modified (omega-N-methylarginine). The interval 37 to 263 is DNA-binding; that stretch reads PGGEQETQEL…GVFLRVSEVK (227 aa). The residue at position 43 (T43) is a Phosphothreonine. S113 carries the phosphoserine modification. R164 is modified (omega-N-methylarginine). An N6-acetyllysine modification is found at K279. Residues 297-307 are compositionally biased toward basic and acidic residues; it reads RQRDKLYERRG. Positions 297–324 are disordered; it reads RQRDKLYERRGGGSGGGDESEGEEVDED. Omega-N-methylarginine is present on R306. A phosphoserine mark is found at S310 and S316. Residues 314–324 show a composition bias toward acidic residues; the sequence is DESEGEEVDED.

The protein belongs to the PUR DNA-binding protein family. Homodimer, heterodimer with PURA and heterotrimer with PURA and YBX1/Y-box protein 1. Interacts with MYOCD and SRF.

The protein localises to the nucleus. Functionally, transcriptional regulator which can act as an activator or a repressor. Represses the transcription of ACTA2 in fibroblasts and smooth muscle cells via its ability to interact with the purine-rich strand of a MCAT-containing element in the 5' flanking region of the gene. Represses the transcription of MYOCD, capable of repressing all isoforms of MYOCD but the magnitude of the repressive effects is most notable for the SMC-specific isoforms. Promotes hepatic glucose production by activating the transcription of ADCY6, leading to cAMP accumulation, increased PKA activity, CREB activation, and increased transcription of PCK1 and G6PC genes. Has capacity to bind repeated elements in single-stranded DNA such as the purine-rich single strand of the PUR element located upstream of the MYC gene. Participates in transcriptional and translational regulation of alpha-MHC expression in cardiac myocytes by binding to the purine-rich negative regulatory (PNR) element. Modulates constitutive liver galectin-3 gene transcription by binding to its promoter. May play a role in the dendritic transport of a subset of mRNAs. The sequence is that of Transcriptional regulator protein Pur-beta (Purb) from Mus musculus (Mouse).